The primary structure comprises 271 residues: Calretinin (271 aa).

EF-hand domains are found at residues 16–51 (LTAS…LEKA), 63–98 (NFGE…EENF), 107–142 (GSSA…LLKK), 151–186 (KLQE…QENF), 195–230 (LTSE…LYEK), and 235–270 (MNIQ…SEPP). Asp29, Asp31, Asn33, Tyr35, Glu40, Asp76, Asn78, Asp80, Lys82, Glu87, Asp120, Asp122, Ser124, Tyr126, Glu131, Asp164, Asn166, Asp168, Lys170, Glu175, Asp208, Asp210, Ser212, Tyr214, and Glu219 together coordinate Ca(2+). Residue Tyr214 is modified to Phosphotyrosine.

This sequence belongs to the calbindin family. In terms of tissue distribution, widely expressed in central nervous system. Expressed in type I unipolar brush cells of the cerebellum (at protein level).

Its subcellular location is the synapse. It localises to the cell projection. The protein localises to the dendrite. Calcium-binding protein involved in calcium homeostasis and signal transduction. It plays a critical role in buffering intracellular calcium levels and modulating calcium-dependent signaling pathways. Predominantly expressed in specific neuronal populations, influences synaptic plasticity and neuronal excitability, contributing to learning and memory. During embryonic development, it facilitates neuronal differentiation and maturation. In Mus musculus (Mouse), this protein is Calretinin (Calb2).